Consider the following 126-residue polypeptide: uncharacterized protein (126 aa).

Residues 3-23 (NMIVLIIFAAFIIYMIASYVY) form a helical membrane-spanning segment. The 85-residue stretch at 39-123 (GYRKAQLIDV…GFKKWGGKIK (85 aa)) folds into the Rhodanese domain.

It localises to the cell membrane. This is an uncharacterized protein from Bacillus subtilis (strain 168).